The primary structure comprises 293 residues: tRNA pseudouridine synthase B (293 aa).

The active-site Nucleophile is the Asp-39.

This sequence belongs to the pseudouridine synthase TruB family. Type 1 subfamily.

The catalysed reaction is uridine(55) in tRNA = pseudouridine(55) in tRNA. Functionally, responsible for synthesis of pseudouridine from uracil-55 in the psi GC loop of transfer RNAs. This chain is tRNA pseudouridine synthase B, found in Streptococcus thermophilus (strain ATCC BAA-250 / LMG 18311).